The sequence spans 429 residues: Histidine--tRNA ligase (429 aa).

This sequence belongs to the class-II aminoacyl-tRNA synthetase family. In terms of assembly, homodimer.

It localises to the cytoplasm. It carries out the reaction tRNA(His) + L-histidine + ATP = L-histidyl-tRNA(His) + AMP + diphosphate + H(+). The protein is Histidine--tRNA ligase of Streptococcus pneumoniae (strain P1031).